The following is an 804-amino-acid chain: Phenylalanine--tRNA ligase beta subunit (804 aa).

In terms of domain architecture, tRNA-binding spans D40–I155. The region spanning Q409–A484 is the B5 domain. 4 residues coordinate Mg(2+): D462, D468, E471, and E472. Residues P710–R803 enclose the FDX-ACB domain.

Belongs to the phenylalanyl-tRNA synthetase beta subunit family. Type 1 subfamily. Tetramer of two alpha and two beta subunits. It depends on Mg(2+) as a cofactor.

It is found in the cytoplasm. It catalyses the reaction tRNA(Phe) + L-phenylalanine + ATP = L-phenylalanyl-tRNA(Phe) + AMP + diphosphate + H(+). The protein is Phenylalanine--tRNA ligase beta subunit of Geobacillus kaustophilus (strain HTA426).